The chain runs to 119 residues: Beta-2-microglobulin (119 aa).

Positions 1–20 (MARFVVVALLVLLSLSGLEA) are cleaved as a signal peptide. The Ig-like C1-type domain maps to 25–114 (PKIQVYSRHP…VTLSTPKTVK (90 aa)). Cys45 and Cys100 are disulfide-bonded.

Belongs to the beta-2-microglobulin family. Heterodimer of an alpha chain and a beta chain. Beta-2-microglobulin is the beta-chain of major histocompatibility complex class I molecules.

It localises to the secreted. Component of the class I major histocompatibility complex (MHC). Involved in the presentation of peptide antigens to the immune system. This Aotus azarae (Azara's night monkey) protein is Beta-2-microglobulin (B2M).